The primary structure comprises 922 residues: Pertactin autotransporter (922 aa).

An N-terminal signal peptide occupies residues 1-34 (MNMSLSRIVKAAPLRRTTLAMALGALGAAPAAYA). A Cell attachment site; involved in adhesion to various eukaryotic cell lines motif is present at residues 260 to 262 (RGD). 3 consecutive repeat copies span residues 266 to 270 (GGAVP), 271 to 275 (GGAVP), and 276 to 280 (GGAVP). A 4 X 5 AA tandem repeats of G-G-A-V-P region spans residues 266-290 (GGAVPGGAVPGGAVPGGFGPLLDGW). One copy of the 4; approximate repeat lies at 281 to 285 (GGFGP). The disordered stretch occupies residues 561–619 (SLVGAKAPPAPKPAPQPGPQPGPQPPQPPQPPQPPQPPQPPQRQPEAPAPQPPAGRELS). Residues 568 to 613 (PPAPKPAPQPGPQPGPQPPQPPQPPQPPQPPQPPQRQPEAPAPQPP) are compositionally biased toward pro residues. Positions 575–603 (PQPGPQPGPQPPQPPQPPQPPQPPQPPQR) are 9 X 3 AA approximate repeats of P-Q-P. The 269-residue stretch at 654–922 (LNPDAGGAWG…TFHAGYRYSW (269 aa)) folds into the Autotransporter domain.

In terms of assembly, monomer.

Its subcellular location is the periplasm. It localises to the secreted. It is found in the cell surface. The protein localises to the cell outer membrane. In terms of biological role, agglutinogen that binds to eukaryotic cells; a process mediated by the R-G-D sequence. Pertactin may have a role in bacterial adhesion, and thus play a role in virulence. May contribute to the disease state of whooping cough. The chain is Pertactin autotransporter (prn) from Bordetella parapertussis (strain 12822 / ATCC BAA-587 / NCTC 13253).